The chain runs to 686 residues: Methionine--tRNA ligase (686 aa).

The 'HIGH' region motif lies at 15 to 25 (PYANGSIHLGH). Zn(2+)-binding residues include cysteine 146, cysteine 149, cysteine 159, and cysteine 162. A 'KMSKS' region motif is present at residues 332 to 336 (KMSKS). Lysine 335 lines the ATP pocket. In terms of domain architecture, tRNA-binding spans 585–686 (AFEAVDMRIA…EGAQPGMRVM (102 aa)).

The protein belongs to the class-I aminoacyl-tRNA synthetase family. MetG type 1 subfamily. Homodimer. Zn(2+) serves as cofactor.

The protein resides in the cytoplasm. It carries out the reaction tRNA(Met) + L-methionine + ATP = L-methionyl-tRNA(Met) + AMP + diphosphate. In terms of biological role, is required not only for elongation of protein synthesis but also for the initiation of all mRNA translation through initiator tRNA(fMet) aminoacylation. This is Methionine--tRNA ligase from Aliivibrio fischeri (strain ATCC 700601 / ES114) (Vibrio fischeri).